The chain runs to 341 residues: Paired box protein Pax-9 (341 aa).

A DNA-binding region (paired) is located at residues 4–130 (AFGEVNQLGG…SSISRILRNK (127 aa)). The PAI subdomain stretch occupies residues 7 to 63 (EVNQLGGVFVNGRPLPNAIRLRIVELAQLGIRPCDISRQLRVSHGCVSKILARYNET). Residues 82-130 (TVVKHIRTYKQRDPGIFAWEIRDRLLADGVCDKYNVPSVSSISRILRNK) form an RED subdomain region. The tract at residues 168-189 (AAAAKVPTPPGVPAIPGSVAMP) is interaction with KDM5B.

In terms of assembly, interacts with KDM5B.

Its subcellular location is the nucleus. Transcription factor required for normal development of thymus, parathyroid glands, ultimobranchial bodies, teeth, skeletal elements of skull and larynx as well as distal limbs. The sequence is that of Paired box protein Pax-9 (PAX9) from Pan troglodytes (Chimpanzee).